Reading from the N-terminus, the 364-residue chain is Alanine racemase (364 aa).

K34 functions as the Proton acceptor; specific for D-alanine in the catalytic mechanism. An N6-(pyridoxal phosphate)lysine modification is found at K34. R129 serves as a coordination point for substrate. Y259 (proton acceptor; specific for L-alanine) is an active-site residue. M307 is a substrate binding site.

The protein belongs to the alanine racemase family. The cofactor is pyridoxal 5'-phosphate.

It carries out the reaction L-alanine = D-alanine. Its pathway is amino-acid biosynthesis; D-alanine biosynthesis; D-alanine from L-alanine: step 1/1. Its function is as follows. Catalyzes the interconversion of L-alanine and D-alanine. May also act on other amino acids. The protein is Alanine racemase (alr) of Coxiella burnetii (strain Dugway 5J108-111).